Reading from the N-terminus, the 138-residue chain is MATRTQARGAVVELLYAFESGNEEIKKIASSMLEEKKIKNNQLAFALSLFNGVLERINEIDALIEPHLKDWDFKRLGSMEKAILRLGAYEIGFTPTQNPIIINECIELGKLYAEPNTPKFLNAILDSLSKKLTQKPLN.

Belongs to the NusB family.

Functionally, involved in transcription antitermination. Required for transcription of ribosomal RNA (rRNA) genes. Binds specifically to the boxA antiterminator sequence of the ribosomal RNA (rrn) operons. This is Transcription antitermination protein NusB from Helicobacter pylori (strain P12).